A 264-amino-acid chain; its full sequence is Hydroxyethylthiazole kinase (264 aa).

M43 contributes to the substrate binding site. Positions 119 and 165 each coordinate ATP. G192 provides a ligand contact to substrate.

The protein belongs to the Thz kinase family. Mg(2+) is required as a cofactor.

The enzyme catalyses 5-(2-hydroxyethyl)-4-methylthiazole + ATP = 4-methyl-5-(2-phosphooxyethyl)-thiazole + ADP + H(+). It participates in cofactor biosynthesis; thiamine diphosphate biosynthesis; 4-methyl-5-(2-phosphoethyl)-thiazole from 5-(2-hydroxyethyl)-4-methylthiazole: step 1/1. Catalyzes the phosphorylation of the hydroxyl group of 4-methyl-5-beta-hydroxyethylthiazole (THZ). This Methanocorpusculum labreanum (strain ATCC 43576 / DSM 4855 / Z) protein is Hydroxyethylthiazole kinase.